A 202-amino-acid chain; its full sequence is Large ribosomal subunit protein uL13 (202 aa).

This sequence belongs to the universal ribosomal protein uL13 family. In terms of assembly, component of the large ribosomal subunit (LSU). Mature N.crassa ribosomes consist of a small (40S) and a large (60S) subunit. The 40S small subunit contains 1 molecule of ribosomal RNA (18S rRNA) and at least 32 different proteins. The large 60S subunit contains 3 rRNA molecules (26S, 5.8S and 5S rRNA) and at least 42 different proteins.

It is found in the cytoplasm. Its function is as follows. Component of the ribosome, a large ribonucleoprotein complex responsible for the synthesis of proteins in the cell. The small ribosomal subunit (SSU) binds messenger RNAs (mRNAs) and translates the encoded message by selecting cognate aminoacyl-transfer RNA (tRNA) molecules. The large subunit (LSU) contains the ribosomal catalytic site termed the peptidyl transferase center (PTC), which catalyzes the formation of peptide bonds, thereby polymerizing the amino acids delivered by tRNAs into a polypeptide chain. The nascent polypeptides leave the ribosome through a tunnel in the LSU and interact with protein factors that function in enzymatic processing, targeting, and the membrane insertion of nascent chains at the exit of the ribosomal tunnel. The polypeptide is Large ribosomal subunit protein uL13 (crp-46) (Neurospora crassa (strain ATCC 24698 / 74-OR23-1A / CBS 708.71 / DSM 1257 / FGSC 987)).